The primary structure comprises 1025 residues: Multidrug resistance protein MdtC (1025 aa).

The next 12 helical transmembrane spans lie at 15–35, 333–353, 360–380, 387–407, 431–451, 469–489, 528–548, 851–871, 875–895, 897–917, 953–973, and 984–1004; these read ILISLAITLCGILGFRLLPVA, EVEQTLVISVALVILVVFLFL, LIPAVAVPVSLIGTFAAMYLC, LSLMALTIATGFVVDDAIVVL, VGFTVLSMSLSLVAVFLPLLL, VAIGISLAVSLTLTPMMCGWL, LTGLVVLGTIALSVWLYISIP, AQVILILAAIATVYIVLGMLY, VHPLTILSTLPSAGVGALLAL, IFDAPFSLIALIGIMLLIGIV, PIMMTTLAALFGALPLVLSGG, and ITIVGGLVMSQLLTLYTTPVV.

The protein belongs to the resistance-nodulation-cell division (RND) (TC 2.A.6) family. MdtC subfamily. Part of a tripartite efflux system composed of MdtA, MdtB and MdtC. MdtC forms a heteromultimer with MdtB.

The protein resides in the cell inner membrane. The sequence is that of Multidrug resistance protein MdtC from Klebsiella pneumoniae (strain 342).